A 567-amino-acid polypeptide reads, in one-letter code: Phenylalanine--tRNA ligase beta subunit (567 aa).

One can recognise a B5 domain in the interval 284–359 (FAVRTKHVSH…RAYDFNDLTP (76 aa)). Mg(2+)-binding residues include aspartate 337, aspartate 343, aspartate 346, and aspartate 347.

The protein belongs to the phenylalanyl-tRNA synthetase beta subunit family. Type 2 subfamily. Tetramer of two alpha and two beta subunits. The cofactor is Mg(2+).

It is found in the cytoplasm. The enzyme catalyses tRNA(Phe) + L-phenylalanine + ATP = L-phenylalanyl-tRNA(Phe) + AMP + diphosphate + H(+). This is Phenylalanine--tRNA ligase beta subunit from Halobacterium salinarum (strain ATCC 29341 / DSM 671 / R1).